Here is a 338-residue protein sequence, read N- to C-terminus: Fructose-1,6-bisphosphatase class 1 (338 aa).

Glu-92, Asp-115, Leu-117, and Asp-118 together coordinate Mg(2+). Substrate is bound by residues 118–121, Asn-211, Tyr-244, 262–264, and Lys-274; these read DGSS and YLY. Position 280 (Glu-280) interacts with Mg(2+).

This sequence belongs to the FBPase class 1 family. As to quaternary structure, homotetramer. The cofactor is Mg(2+).

It is found in the cytoplasm. The catalysed reaction is beta-D-fructose 1,6-bisphosphate + H2O = beta-D-fructose 6-phosphate + phosphate. It participates in carbohydrate biosynthesis; gluconeogenesis. This is Fructose-1,6-bisphosphatase class 1 from Vibrio vulnificus (strain YJ016).